The chain runs to 632 residues: Extracellular metalloproteinase 2 (632 aa).

The first 19 residues, 1-19, serve as a signal peptide directing secretion; it reads MHGLLLAGLAAALPLGVAG. The propeptide occupies 20–244; that stretch reads LPARQQSGLS…VHNVVDYVAS (225 aa). Asn270 carries N-linked (GlcNAc...) asparagine glycosylation. Residue His429 coordinates Zn(2+). Glu430 is a catalytic residue. Residue His433 coordinates Zn(2+).

Belongs to the peptidase M36 family. Zn(2+) serves as cofactor.

It localises to the secreted. Secreted metalloproteinase that allows assimilation of proteinaceous substrates and probably acts as a virulence factor. This chain is Extracellular metalloproteinase 2 (MEP2), found in Arthroderma gypseum (strain ATCC MYA-4604 / CBS 118893) (Microsporum gypseum).